A 306-amino-acid polypeptide reads, in one-letter code: tRNA-cytidine(32) 2-sulfurtransferase (306 aa).

The interval 1-25 (MSAVISLPDPQPRAARDPRVAEREQ) is disordered. The span at 14 to 25 (AARDPRVAEREQ) shows a compositional bias: basic and acidic residues. The PP-loop motif motif lies at 57-62 (SGGKDS). Positions 132, 135, and 223 each coordinate [4Fe-4S] cluster. Residues 286–306 (AHAWLAGSPADADADPETPTV) are disordered. The span at 297–306 (ADADPETPTV) shows a compositional bias: acidic residues.

Belongs to the TtcA family. Homodimer. Mg(2+) is required as a cofactor. The cofactor is [4Fe-4S] cluster.

The protein resides in the cytoplasm. The enzyme catalyses cytidine(32) in tRNA + S-sulfanyl-L-cysteinyl-[cysteine desulfurase] + AH2 + ATP = 2-thiocytidine(32) in tRNA + L-cysteinyl-[cysteine desulfurase] + A + AMP + diphosphate + H(+). The protein operates within tRNA modification. Its function is as follows. Catalyzes the ATP-dependent 2-thiolation of cytidine in position 32 of tRNA, to form 2-thiocytidine (s(2)C32). The sulfur atoms are provided by the cysteine/cysteine desulfurase (IscS) system. This Stenotrophomonas maltophilia (strain K279a) protein is tRNA-cytidine(32) 2-sulfurtransferase.